A 393-amino-acid chain; its full sequence is MTNSNRIKLTWISFLSYALTGALVIVTGMVMGNIADYFNLPVSSMSNTFTFLNAGILISIFLNAWLMEIVPLKTQLRFGFLLMVLAVAGLMFSHSLALFSTAMFILGVVSGITMSIGTFLITQMYEGRQRGSRLLFTDSFFSMAGMIFPMIAAFLLARSIEWYWVYACIGLVYVAIFILTFGCEFPALGKHAPKTDAPVEKEKWGIGVLFLSVAALCYILGQLGFISWVPEYAKGLGMSLNDAGTLVSNFWMSYMVGMWAFSFILRFFDLQRILTVLAGLAAILMYVFNTGTPAHMAWSILALGFFSSAIYTTIITLGSQQTKVPSPKLVNFVLTCGTIGTMLTFVVTGPIVEHSGPQAALLTANGLYAVVFVMCFLLGFVSRHRQHNTLTSH.

12 helical membrane passes run 11–31, 51–71, 78–98, 101–121, 134–154, 162–182, 206–226, 245–265, 273–293, 297–317, 332–352, and 361–381; these read WISF…GMVM, FLNA…EIVP, FGFL…SLAL, TAMF…TFLI, LLFT…IAAF, WYWV…LTFG, IGVL…LGFI, TLVS…SFIL, ILTV…TGTP, AWSI…IITL, FVLT…GPIV, and LLTA…LGFV.

Belongs to the major facilitator superfamily. TsgA family.

The protein resides in the cell inner membrane. In Shigella boydii serotype 4 (strain Sb227), this protein is Protein TsgA.